Here is a 330-residue protein sequence, read N- to C-terminus: GMP reductase (330 aa).

Cys180 (thioimidate intermediate) is an active-site residue. Residue 209 to 232 (LIADGGIRHNGDIAKSVRFGASMV) coordinates NADP(+).

It belongs to the IMPDH/GMPR family. GuaC type 2 subfamily.

The catalysed reaction is IMP + NH4(+) + NADP(+) = GMP + NADPH + 2 H(+). Functionally, catalyzes the irreversible NADPH-dependent deamination of GMP to IMP. It functions in the conversion of nucleobase, nucleoside and nucleotide derivatives of G to A nucleotides, and in maintaining the intracellular balance of A and G nucleotides. In Lactobacillus delbrueckii subsp. bulgaricus (strain ATCC 11842 / DSM 20081 / BCRC 10696 / JCM 1002 / NBRC 13953 / NCIMB 11778 / NCTC 12712 / WDCM 00102 / Lb 14), this protein is GMP reductase.